The following is a 202-amino-acid chain: Small ribosomal subunit protein uS2 (202 aa).

The protein belongs to the universal ribosomal protein uS2 family.

This Methanocorpusculum labreanum (strain ATCC 43576 / DSM 4855 / Z) protein is Small ribosomal subunit protein uS2.